Here is a 622-residue protein sequence, read N- to C-terminus: Cilia- and flagella-associated protein 206 (622 aa).

Positions asparagine 568–proline 593 are disordered.

Belongs to the CFAP206 family. As to expression, expressed in the sperm, oviduct, lung, nasal cavity, brain ependyma and choroid plexus.

It is found in the cytoplasm. The protein localises to the cytoskeleton. The protein resides in the cilium axoneme. Its subcellular location is the cilium basal body. In terms of biological role, essential for sperm motility and is involved in the regulation of the beating frequency of motile cilia on the epithelial cells of the respiratory tract. Required for the establishment of radial spokes in sperm flagella. This is Cilia- and flagella-associated protein 206 from Mus musculus (Mouse).